A 132-amino-acid chain; its full sequence is MKHVKPFFLFVDPKKSASGKQGEASSHGKGFLICRYASFPLHTESKVVRFANVTDQKFGHALSFFFSYIHCTRHVGSAPLTVSQPHIDVHCEQPISFHVSQCPAYENCHSLPLDPQSPLHSPPLSTSPDSRR.

Positions L113–R132 are disordered.

This is an uncharacterized protein from Saccharomyces cerevisiae (strain ATCC 204508 / S288c) (Baker's yeast).